Consider the following 72-residue polypeptide: Beta-defensin 104 (72 aa).

The signal sequence occupies residues 1-22; sequence MQRLVLLLAISLLLYQDLPVRS. Disulfide bonds link Cys30/Cys57, Cys37/Cys51, and Cys41/Cys58.

Belongs to the beta-defensin family. High expression in the testis. Gastric antrum exhibited relatively high levels. A lower expression is observed in uterus and neutrophils thyroid gland, lung, and kidney. No detectable expression in other tissues tested.

It is found in the secreted. Has antimicrobial activity. Synergistic effects with lysozyme and DEFB103. This Homo sapiens (Human) protein is Beta-defensin 104 (DEFB104A).